The primary structure comprises 276 residues: D-aminoacyl-tRNA deacylase (276 aa).

Belongs to the DtdA deacylase family. In terms of assembly, monomer. The cofactor is Zn(2+).

The catalysed reaction is a D-aminoacyl-tRNA + H2O = a tRNA + a D-alpha-amino acid + H(+). The enzyme catalyses glycyl-tRNA(Ala) + H2O = tRNA(Ala) + glycine + H(+). In terms of biological role, D-aminoacyl-tRNA deacylase with broad substrate specificity. By recycling D-aminoacyl-tRNA to D-amino acids and free tRNA molecules, this enzyme counteracts the toxicity associated with the formation of D-aminoacyl-tRNA entities in vivo. The sequence is that of D-aminoacyl-tRNA deacylase from Korarchaeum cryptofilum (strain OPF8).